The chain runs to 421 residues: Histidine--tRNA ligase (421 aa).

This sequence belongs to the class-II aminoacyl-tRNA synthetase family.

It is found in the cytoplasm. The enzyme catalyses tRNA(His) + L-histidine + ATP = L-histidyl-tRNA(His) + AMP + diphosphate + H(+). This Pyrobaculum calidifontis (strain DSM 21063 / JCM 11548 / VA1) protein is Histidine--tRNA ligase.